The primary structure comprises 181 residues: ATP synthase subunit b (181 aa).

Residues 24 to 44 form a helical membrane-spanning segment; it reads LFPNLPNFIAHLLATIVLVIV.

This sequence belongs to the ATPase B chain family. F-type ATPases have 2 components, F(1) - the catalytic core - and F(0) - the membrane proton channel. F(1) has five subunits: alpha(3), beta(3), gamma(1), delta(1), epsilon(1). F(0) has three main subunits: a(1), b(2) and c(10-14). The alpha and beta chains form an alternating ring which encloses part of the gamma chain. F(1) is attached to F(0) by a central stalk formed by the gamma and epsilon chains, while a peripheral stalk is formed by the delta and b chains.

Its subcellular location is the cell membrane. Functionally, f(1)F(0) ATP synthase produces ATP from ADP in the presence of a proton or sodium gradient. F-type ATPases consist of two structural domains, F(1) containing the extramembraneous catalytic core and F(0) containing the membrane proton channel, linked together by a central stalk and a peripheral stalk. During catalysis, ATP synthesis in the catalytic domain of F(1) is coupled via a rotary mechanism of the central stalk subunits to proton translocation. Its function is as follows. Component of the F(0) channel, it forms part of the peripheral stalk, linking F(1) to F(0). This chain is ATP synthase subunit b, found in Mycoplasma capricolum subsp. capricolum (strain California kid / ATCC 27343 / NCTC 10154).